The primary structure comprises 352 residues: PhoH-like protein (352 aa).

Residues 1–21 form a disordered region; that stretch reads MTSRETRAADAAGARQADAQV. The segment covering 9 to 20 has biased composition (low complexity); sequence ADAAGARQADAQ. An ATP-binding site is contributed by 150–157; the sequence is GPAGTGKT.

It belongs to the PhoH family.

Its subcellular location is the cytoplasm. This chain is PhoH-like protein, found in Mycobacterium bovis (strain ATCC BAA-935 / AF2122/97).